Consider the following 411-residue polypeptide: S-adenosylmethionine synthase (411 aa).

H15 lines the ATP pocket. Residue D17 coordinates Mg(2+). E43 is a binding site for K(+). 2 residues coordinate L-methionine: E56 and Q99. The interval 99 to 109 (QSQEIAQGVDT) is flexible loop. ATP contacts are provided by residues 179 to 181 (DGK), D260, 266 to 267 (RK), A283, and K287. Residue D260 participates in L-methionine binding. K291 contributes to the L-methionine binding site.

This sequence belongs to the AdoMet synthase family. As to quaternary structure, homotetramer; dimer of dimers. It depends on Mg(2+) as a cofactor. K(+) is required as a cofactor.

The protein resides in the cytoplasm. It catalyses the reaction L-methionine + ATP + H2O = S-adenosyl-L-methionine + phosphate + diphosphate. It functions in the pathway amino-acid biosynthesis; S-adenosyl-L-methionine biosynthesis; S-adenosyl-L-methionine from L-methionine: step 1/1. Its function is as follows. Catalyzes the formation of S-adenosylmethionine (AdoMet) from methionine and ATP. The overall synthetic reaction is composed of two sequential steps, AdoMet formation and the subsequent tripolyphosphate hydrolysis which occurs prior to release of AdoMet from the enzyme. This Corynebacterium jeikeium (strain K411) protein is S-adenosylmethionine synthase.